A 300-amino-acid polypeptide reads, in one-letter code: Flaviolin linalyltransferase (300 aa).

The protein belongs to the aromatic prenyltransferase family. In terms of assembly, monomer.

The catalysed reaction is flaviolin + (2E)-geranyl diphosphate = 3-linalylflaviolin + diphosphate. With respect to regulation, does not require magnesium or any other divalent metal ions for activity. In terms of biological role, involved in the biosynthesis of furanonaphthoquinone I (FNQ I). Catalyzes C- and O-prenylations of different phenolic substrates. With flaviolin as substrate, catalyzes the formation of a carbon-carbon-bond between C-3 (rather than C-1) of geranyl diphosphate and C-3 of flaviolin. With 1,3-dihydroxynaphthalene and 4-hydroxybenzoate as substrates, catalyzes O-prenylations. The protein is Flaviolin linalyltransferase of Streptomyces virginiae (Streptomyces cinnamonensis).